Reading from the N-terminus, the 78-residue chain is Small ribosomal subunit protein bS18B (78 aa).

The interval 1 to 22 (MPRKPVRKVASTPRPNPLDQNG) is disordered.

This sequence belongs to the bacterial ribosomal protein bS18 family. In terms of assembly, part of the 30S ribosomal subunit. Forms a tight heterodimer with protein bS6.

Binds as a heterodimer with protein bS6 to the central domain of the 16S rRNA, where it helps stabilize the platform of the 30S subunit. The protein is Small ribosomal subunit protein bS18B of Streptomyces avermitilis (strain ATCC 31267 / DSM 46492 / JCM 5070 / NBRC 14893 / NCIMB 12804 / NRRL 8165 / MA-4680).